Consider the following 746-residue polypeptide: Chitin biosynthesis protein CHS6 (746 aa).

The disordered stretch occupies residues 1–25 (MNLFWPSETKKQNEIPGGDYTPGNS). A CHS5-binding region spans residues 734 to 746 (LAWIADLDHTVQP).

This sequence belongs to the CHAPS family. Component of the CHS5/6 complex composed of the 4 CHAPS proteins BCH1, BCH2, BUD7, and CHS6 as well as at least CHS5 and GTP-bound ARF1. The complex interacts with the cargo protein CHS3.

Its subcellular location is the golgi apparatus. The protein resides in the trans-Golgi network membrane. Functionally, member of the CHS5-ARF1P-binding proteins (CHAPS) which mediates export of specific cargo proteins, including chitin synthase CHS3. This chain is Chitin biosynthesis protein CHS6 (CHS6), found in Saccharomyces cerevisiae (strain ATCC 204508 / S288c) (Baker's yeast).